The sequence spans 532 residues: MDQFGDILEGEVDHSFFDSDFEEGKKCETNSVFDKQNDDPKERIDKDTKNVNSNTGMQTTENYLTEKGNERNVKFPPEHPVENDVTQTVSSFSLPASSRSKKLCDVTTGLKIHVSIPNRIPKIVKEGEDDYYTDGEESSDDGKKYHVKSKSAKPSTNVKKSIRKKYCKVSSSSSSSLSSSSSGSGTDCLDAGSDSHLSDSSPSSKSSKKHVSGITLLSPKHKYKSGIKSTETQPSSTTPKCGHYPEESEDTVTDVSPLSTPDISPLQSFELGIANDQKVKIKKQENVSQEIYEDVEDLKNNSKYLKAAKKGKEKHEPDVSSKSSSVLDSSLDHRHKQKVLHDTMDLNHLLKAFLQLDKKGPQKHHFDQPSVAPGKNYSFTREEVRQIDRENQRLLKELSRQAEKPGSKSTIPRSADHPPKLYHSALNRQKEQQRIERENLALLKRLEAVKPTVGMKRSEQLMDYHRNMGYLNSSPLSRRARSTLGQYSPLRASRTSSATSGLSCRSERSAVDPSSGHPRRRPKPPNVRTAWL.

At Ser-19 the chain carries Phosphoserine. 5 disordered regions span residues 28–83 (ETNS…PVEN), 116–263 (IPNR…TPDI), 306–333 (KAAK…SLDH), 398–421 (LSRQ…PPKL), and 485–532 (GQYS…TAWL). Positions 35–49 (KQNDDPKERIDKDTK) are enriched in basic and acidic residues. Residues 50–63 (NVNSNTGMQTTENY) show a composition bias toward polar residues. A compositionally biased stretch (basic and acidic residues) spans 67–82 (KGNERNVKFPPEHPVE). Over residues 127–139 (GEDDYYTDGEESS) the composition is skewed to acidic residues. Thr-133 is modified (phosphothreonine). Ser-138 and Ser-139 each carry phosphoserine. Low complexity-rich tracts occupy residues 170-185 (SSSS…SGSG) and 194-205 (DSHLSDSSPSSK). At Ser-218 the chain carries Phosphoserine. The span at 227-239 (IKSTETQPSSTTP) shows a compositional bias: polar residues. Ser-248 carries the phosphoserine modification. Polar residues predominate over residues 253-263 (TDVSPLSTPDI). Low complexity predominate over residues 320 to 329 (SSKSSSVLDS). Ser-330 bears the Phosphoserine mark. Positions 374–450 (GKNYSFTREE…ALLKRLEAVK (77 aa)) form a coiled coil. Positions 493 to 503 (SRTSSATSGLS) are enriched in polar residues.

The protein belongs to the CFAP97 family.

This is Cilia- and flagella-associated protein 97 from Homo sapiens (Human).